The primary structure comprises 227 residues: Homeobox protein HD-10 (227 aa).

The segment at residues 30–89 (FVKHRKRTTKAQLKVLEETFETNIRPDANMRKKLGEQLGMTPRSVQVWFQNRRAKIKKLT) is a DNA-binding region (homeobox). A disordered region spans residues 88–115 (LTQKKMMQQENTDNTKGPDAAHGSSSPK). Residues 92–102 (KMMQQENTDNT) are compositionally biased toward polar residues.

It is found in the nucleus. The polypeptide is Homeobox protein HD-10 (HD-10) (Encephalitozoon cuniculi (strain GB-M1) (Microsporidian parasite)).